A 287-amino-acid chain; its full sequence is Nucleotide-binding protein VV0445 (287 aa).

8 to 15 (GHSGAGKS) contacts ATP. 56-59 (DVRN) contributes to the GTP binding site.

It belongs to the RapZ-like family.

Displays ATPase and GTPase activities. The chain is Nucleotide-binding protein VV0445 from Vibrio vulnificus (strain YJ016).